Reading from the N-terminus, the 64-residue chain is Small ribosomal subunit protein bS21 (64 aa).

The interval 26 to 64 (DGILSEARRRTRFERPPTRRKRKDAAKRRLAIKAARKAT) is disordered. Residues 43 to 64 (TRRKRKDAAKRRLAIKAARKAT) are compositionally biased toward basic residues.

This sequence belongs to the bacterial ribosomal protein bS21 family.

The chain is Small ribosomal subunit protein bS21 from Dehalococcoides mccartyi (strain ATCC BAA-2100 / JCM 16839 / KCTC 5957 / BAV1).